The primary structure comprises 55 residues: MAKPATVKIKLVSTADTGFYYVTKKNPRNITEKMTFRKYDPVVRKHVEFKEAKIK.

Belongs to the bacterial ribosomal protein bL33 family.

This chain is Large ribosomal subunit protein bL33, found in Erythrobacter litoralis (strain HTCC2594).